We begin with the raw amino-acid sequence, 265 residues long: Type III pantothenate kinase (265 aa).

6 to 13 (DVGNTHTV) provides a ligand contact to ATP. 112 to 115 (GADR) contacts substrate. Asp-114 serves as the catalytic Proton acceptor. Position 134 (Asp-134) interacts with K(+). Thr-137 serves as a coordination point for ATP. A substrate-binding site is contributed by Thr-189.

The protein belongs to the type III pantothenate kinase family. Homodimer. Requires NH4(+) as cofactor. It depends on K(+) as a cofactor.

The protein localises to the cytoplasm. The catalysed reaction is (R)-pantothenate + ATP = (R)-4'-phosphopantothenate + ADP + H(+). It functions in the pathway cofactor biosynthesis; coenzyme A biosynthesis; CoA from (R)-pantothenate: step 1/5. Catalyzes the phosphorylation of pantothenate (Pan), the first step in CoA biosynthesis. In Streptomyces avermitilis (strain ATCC 31267 / DSM 46492 / JCM 5070 / NBRC 14893 / NCIMB 12804 / NRRL 8165 / MA-4680), this protein is Type III pantothenate kinase.